A 555-amino-acid polypeptide reads, in one-letter code: Aerobic glycerol-3-phosphate dehydrogenase (555 aa).

Position 24 to 52 (24 to 52) interacts with FAD; the sequence is DLFIIGGGITGAGTALDAASRGMKVALSE.

This sequence belongs to the FAD-dependent glycerol-3-phosphate dehydrogenase family. FAD is required as a cofactor.

The protein localises to the cytoplasm. It catalyses the reaction a quinone + sn-glycerol 3-phosphate = dihydroxyacetone phosphate + a quinol. The protein operates within polyol metabolism; glycerol degradation via glycerol kinase pathway; glycerone phosphate from sn-glycerol 3-phosphate (aerobic route): step 1/1. This chain is Aerobic glycerol-3-phosphate dehydrogenase (glpD), found in Bacillus subtilis (strain 168).